Consider the following 113-residue polypeptide: U11-theraphotoxin-Hhn1f (113 aa).

Positions 1–21 (MNTVRVTFLLVFVLAVSLGQA) are cleaved as a signal peptide. Residues 22 to 74 (DKDENRMEMQEKTEQGKSYLDFAENLLLQKLEELEAKLLEEDSKESRNSRQKR) constitute a propeptide that is removed on maturation. Residues 61–82 (EEDSKESRNSRQKRCIGEGVPC) form a disordered region. Disulfide bonds link Cys75/Cys90, Cys82/Cys95, and Cys89/Cys110.

It belongs to the neurotoxin 14 (magi-1) family. 01 (HNTX-16) subfamily. In terms of tissue distribution, expressed by the venom gland.

The protein localises to the secreted. Functionally, probable ion channel inhibitor. The sequence is that of U11-theraphotoxin-Hhn1f from Cyriopagopus hainanus (Chinese bird spider).